The primary structure comprises 341 residues: Arfaptin-2 (341 aa).

Residues 46–85 form a disordered region; the sequence is NETSIVSGGYGGSGDGLIPTGSGRHPSHSTTPSGPGDEVA. A Phosphoserine modification is found at serine 72. Threonine 76 bears the Phosphothreonine mark. Positions 121 to 321 constitute an AH domain; it reads TVDLELELQI…NQKQLEQTLQ (201 aa).

In terms of assembly, forms homodimers or heterodimers with ARFIP1. Interacts with RAC1. Specifically binds to GTP-bound ARF1 and ARF6, but binds to RAC1.GTP and RAC1.GDP with similar affinities. Interacts with ARL1. Interacts (via N-terminus) with IKBKB and IKBKG; these interactions inhibit activation of NF-kappa-B.

The protein localises to the golgi apparatus. The protein resides in the trans-Golgi network membrane. Its function is as follows. Plays a role in constitutive metalloproteinase (MMP) secretion from the trans Golgi network. May have important functions during vesicle biogenesis at certain cargo subdomains, which could be predominantly utilized by secreted MMPs, such as MMP7 and MMP2. Also involved in autophagy by regulating the starvation-dependent trafficking of ATG9A vesicles which deliver the phosphatidylinositol 4-kinase beta (PI4KB) to the autophagosome initiation site. Involved in phagophore growth during mitophagy by regulating ATG9A trafficking to mitochondria. In addition, plays a role in NF-kappa-B inhibition by interacting with IKBKB and IKBKG. This is Arfaptin-2 from Homo sapiens (Human).